A 638-amino-acid chain; its full sequence is Growth hormone receptor (638 aa).

The N-terminal stretch at 1-18 (MDLWQLLLTLALAGSSDA) is a signal peptide. Residues 19 to 264 (FSGSEPTAAI…NQFTCEEDFY (246 aa)) are Extracellular-facing. The N-linked (GlcNAc...) asparagine glycan is linked to asparagine 46. 2 cysteine pairs are disulfide-bonded: cysteine 56–cysteine 66 and cysteine 101–cysteine 112. Asparagine 115 carries an N-linked (GlcNAc...) asparagine glycan. The cysteines at positions 126 and 140 are disulfide-linked. Residues 151–254 (PPIALNWTLL…EVLYVTLPQM (104 aa)) form the Fibronectin type-III domain. Asparagine 156, asparagine 161, and asparagine 200 each carry an N-linked (GlcNAc...) asparagine glycan. A WSXWS motif motif is present at residues 240-244 (YGEFS). A helical transmembrane segment spans residues 265 to 288 (FPWLLIIIFGIFGLTVMLFVFLFS). Residues 289 to 638 (KQQRIKMLIL…STDQLNKIMP (350 aa)) lie on the Cytoplasmic side of the membrane. A required for JAK2 binding region spans residues 294–379 (KMLILPPVPV…HQKSHSNLGV (86 aa)). Positions 297–305 (ILPPVPVPK) match the Box 1 motif motif. The short motif at 340 to 349 (DSWVEFIELD) is the UbE motif element. Serine 341 bears the Phosphoserine mark. Residues 353-388 (PDEKNEGSDTDRLLSSDHQKSHSNLGVKDGDSGRTS) are disordered. The segment covering 356-372 (KNEGSDTDRLLSSDHQK) has biased composition (basic and acidic residues). 2 positions are modified to phosphotyrosine: tyrosine 487 and tyrosine 595.

This sequence belongs to the type I cytokine receptor family. Type 1 subfamily. On growth hormone (GH) binding, forms homodimers and binds JAK2 via a box 1-containing domain. In terms of processing, the soluble form (GHBP) is produced by phorbol ester-promoted proteolytic cleavage at the cell surface (shedding) by ADAM17/TACE. Shedding is inhibited by growth hormone (GH) binding to the receptor probably due to a conformational change in GHR rendering the receptor inaccessible to ADAM17. On GH binding, phosphorylated on tyrosine residues in the cytoplasmic domain by JAK2. Post-translationally, ubiquitinated by the ECS(SOCS2) complex following ligand-binding and phosphorylation by JAK2, leading to its degradation by the proteasome. Regulation by the ECS(SOCS2) complex acts as a negative feedback loop of growth hormone receptor signaling. Ubiquitination is not sufficient for GHR internalization.

It is found in the cell membrane. Its subcellular location is the secreted. Receptor for pituitary gland growth hormone (GH1) involved in regulating postnatal body growth. On ligand binding, couples to the JAK2/STAT5 pathway. Its function is as follows. The soluble form (GHBP) acts as a reservoir of growth hormone in plasma and may be a modulator/inhibitor of GH signaling. In Papio anubis (Olive baboon), this protein is Growth hormone receptor (GHR).